The following is a 302-amino-acid chain: uncharacterized protein (302 aa).

Disordered stretches follow at residues 15-34, 143-195, and 221-246; these read RHSTIPSDTHTSREKPRFHK, GMPL…PSHL, and GSEARSLSLRRQESQPHSGSSRRESV. The segment covering 172-189 has biased composition (basic and acidic residues); that stretch reads HSDENKATGQGRENRDQP.

This is an uncharacterized protein from Homo sapiens (Human).